The primary structure comprises 454 residues: Probable ECA polymerase (454 aa).

The next 11 helical transmembrane spans lie at 3 to 23 (LGQFGGLFCIYLIAVIFILTL), 39 to 59 (FSMLYLLTFYFGFPLTCMLVF), 61 to 81 (FGVAVVPVEYLLYAMLSATAF), 119 to 139 (LALVAVGTVGIFFMQNGFLLF), 154 to 174 (GVALKRFFYFFIPAMLVVYFL), 180 to 200 (AWFFFLASTVAFGILTYVIVG), 201 to 221 (GTRANIIIAFSLFLFIGIVRG), 222 to 242 (WITLWMLAAAGVFGIVGMFWL), 340 to 360 (LVVMGGVLFIPLGAIVVGLII), 377 to 397 (YKAAILQSFCFGAVFNIIVLA), and 409 to 429 (VFFCVIFGACLVLAKLLYWLF).

This sequence belongs to the WzyE family. Probably part of a complex composed of WzxE, WzyE and WzzE.

It localises to the cell inner membrane. It functions in the pathway bacterial outer membrane biogenesis; enterobacterial common antigen biosynthesis. Probably involved in the polymerization of enterobacterial common antigen (ECA) trisaccharide repeat units. The chain is Probable ECA polymerase from Yersinia pseudotuberculosis serotype O:1b (strain IP 31758).